The primary structure comprises 475 residues: UDP-N-acetylmuramoylalanine--D-glutamate ligase (475 aa).

130–136 (GTNGKTT) contributes to the ATP binding site.

This sequence belongs to the MurCDEF family.

Its subcellular location is the cytoplasm. The catalysed reaction is UDP-N-acetyl-alpha-D-muramoyl-L-alanine + D-glutamate + ATP = UDP-N-acetyl-alpha-D-muramoyl-L-alanyl-D-glutamate + ADP + phosphate + H(+). It functions in the pathway cell wall biogenesis; peptidoglycan biosynthesis. Functionally, cell wall formation. Catalyzes the addition of glutamate to the nucleotide precursor UDP-N-acetylmuramoyl-L-alanine (UMA). In Corynebacterium diphtheriae (strain ATCC 700971 / NCTC 13129 / Biotype gravis), this protein is UDP-N-acetylmuramoylalanine--D-glutamate ligase.